The sequence spans 521 residues: MTQDKILILDFGSQVTQLIARRVREAHVYCELHSFDMPLDEIKAFNPKGIILSGGPNSVYESDYQADTGIFDLGIPILGICYGMQFMAHHLGGEVQPGNQREFGYAQVKTIDSELTRGIQDDTPNTLDVWMSHGDKVSKLPTGFTVIGDTPSCPIAMMENAEKQFYGIQFHPEVTHTKQGRALLNRFVLDICGAQPGWTMPNYIEEAVAKIREQVGSDEVILGLSGGVDSSVAAALIHRAIGDQLTCVFVDHGLLRLNEGKMVMDMFARNLGVKVIHVDAEGQFMAKLAGVTDPEKKRKIIGAEFIEVFDAEEKKLTNAKWLAQGTIYPDVIESAGAKTKKAHAIKSHHNVGGLPENMKLKLLEPLRDLFKDEVRELGVALGLPREMVYRHPFPGPGLGVRILGEVKKEYADLLRQADDIFIQELRNTTDENGTSWYDLTSQAFAVFLPVKSVGVMGDGRTYDYVVALRAVITSDFMTAHWAELPYSLLGRVSNRIINEVKGINRVVYDVSGKPPATIEWE.

The Glutamine amidotransferase type-1 domain maps to 5 to 197 (KILILDFGSQ…VLDICGAQPG (193 aa)). Cys81 (nucleophile) is an active-site residue. Active-site residues include His171 and Glu173. The region spanning 198-390 (WTMPNYIEEA…LGLPREMVYR (193 aa)) is the GMPS ATP-PPase domain. 225-231 (SGGVDSS) is a binding site for ATP.

In terms of assembly, homodimer.

The enzyme catalyses XMP + L-glutamine + ATP + H2O = GMP + L-glutamate + AMP + diphosphate + 2 H(+). It functions in the pathway purine metabolism; GMP biosynthesis; GMP from XMP (L-Gln route): step 1/1. Catalyzes the synthesis of GMP from XMP. This Neisseria meningitidis serogroup A / serotype 4A (strain DSM 15465 / Z2491) protein is GMP synthase [glutamine-hydrolyzing] (guaA).